Reading from the N-terminus, the 140-residue chain is Histone H2B.1, sperm (140 aa).

The segment at 1-47 is disordered; it reads MPSQRSPTKRSPTKRSPQKGAGKGGKGSKRGGKARRRGGAAVRRRRR. 3 short sequence motifs (SPKK motif) span residues 6–9, 11–14, and 16–19; these read SPTK and SPQK. Composition is skewed to basic residues over residues 7–17 and 26–47; these read PTKRSPTKRSP and KGSK…RRRR. A phosphoserine mark is found at serine 11 and serine 16. The O-linked (GlcNAc) serine glycan is linked to serine 127. Residue lysine 135 forms a Glycyl lysine isopeptide (Lys-Gly) (interchain with G-Cter in ubiquitin) linkage.

This sequence belongs to the histone H2B family. As to quaternary structure, the nucleosome is a histone octamer containing two molecules each of H2A, H2B, H3 and H4 assembled in one H3-H4 heterotetramer and two H2A-H2B heterodimers. The octamer wraps approximately 147 bp of DNA. Post-translationally, monoubiquitination of Lys-135 gives a specific tag for epigenetic transcriptional activation and is also prerequisite for histone H3 'Lys-4' and 'Lys-79' methylation. In terms of processing, phosphorylated on SPKK motifs 2 and 3; which may regulate DNA binding. Dephosphorylated during maturation of spermatids to mature sperm and rephosphorylated at fertilization. GlcNAcylation at Ser-127 promotes monoubiquitination of Lys-135. It fluctuates in response to extracellular glucose, and associates with transcribed genes.

It is found in the nucleus. Its subcellular location is the chromosome. Core component of nucleosome. Nucleosomes wrap and compact DNA into chromatin, limiting DNA accessibility to the cellular machineries which require DNA as a template. Histones thereby play a central role in transcription regulation, DNA repair, DNA replication and chromosomal stability. DNA accessibility is regulated via a complex set of post-translational modifications of histones, also called histone code, and nucleosome remodeling. This Strongylocentrotus purpuratus (Purple sea urchin) protein is Histone H2B.1, sperm.